The primary structure comprises 126 residues: S-adenosylmethionine decarboxylase proenzyme (126 aa).

Serine 63 serves as the catalytic Schiff-base intermediate with substrate; via pyruvic acid. Serine 63 is modified (pyruvic acid (Ser); by autocatalysis). Histidine 68 serves as the catalytic Proton acceptor; for processing activity. Catalysis depends on cysteine 83, which acts as the Proton donor; for catalytic activity.

Belongs to the prokaryotic AdoMetDC family. Type 1 subfamily. In terms of assembly, heterotetramer of two alpha and two beta chains arranged as a dimer of alpha/beta heterodimers. Pyruvate serves as cofactor. In terms of processing, is synthesized initially as an inactive proenzyme. Formation of the active enzyme involves a self-maturation process in which the active site pyruvoyl group is generated from an internal serine residue via an autocatalytic post-translational modification. Two non-identical subunits are generated from the proenzyme in this reaction, and the pyruvate is formed at the N-terminus of the alpha chain, which is derived from the carboxyl end of the proenzyme. The post-translation cleavage follows an unusual pathway, termed non-hydrolytic serinolysis, in which the side chain hydroxyl group of the serine supplies its oxygen atom to form the C-terminus of the beta chain, while the remainder of the serine residue undergoes an oxidative deamination to produce ammonia and the pyruvoyl group blocking the N-terminus of the alpha chain.

It catalyses the reaction S-adenosyl-L-methionine + H(+) = S-adenosyl 3-(methylsulfanyl)propylamine + CO2. It participates in amine and polyamine biosynthesis; S-adenosylmethioninamine biosynthesis; S-adenosylmethioninamine from S-adenosyl-L-methionine: step 1/1. Functionally, catalyzes the decarboxylation of S-adenosylmethionine to S-adenosylmethioninamine (dcAdoMet), the propylamine donor required for the synthesis of the polyamines spermine and spermidine from the diamine putrescine. This chain is S-adenosylmethionine decarboxylase proenzyme, found in Oceanobacillus iheyensis (strain DSM 14371 / CIP 107618 / JCM 11309 / KCTC 3954 / HTE831).